The sequence spans 298 residues: Probable endonuclease 4 (298 aa).

Residues His-69, His-111, Glu-146, Asp-180, His-183, His-215, Asp-228, His-230, and Glu-260 each coordinate Zn(2+).

This sequence belongs to the AP endonuclease 2 family. It depends on Zn(2+) as a cofactor.

The catalysed reaction is Endonucleolytic cleavage to 5'-phosphooligonucleotide end-products.. Functionally, endonuclease IV plays a role in DNA repair. It cleaves phosphodiester bonds at apurinic or apyrimidinic (AP) sites, generating a 3'-hydroxyl group and a 5'-terminal sugar phosphate. This Bacillus cereus (strain AH820) protein is Probable endonuclease 4.